The chain runs to 193 residues: Acyl-homoserine-lactone synthase (193 aa).

This sequence belongs to the autoinducer synthase family.

The catalysed reaction is a fatty acyl-[ACP] + S-adenosyl-L-methionine = an N-acyl-L-homoserine lactone + S-methyl-5'-thioadenosine + holo-[ACP] + H(+). Its function is as follows. Required for the synthesis of OHHL (N-(3-oxohexanoyl)-L-homoserine lactone) also known as VAI or N-(beta-ketocaproyl)homoserine lactone or 3-oxo-N-(tetrahydro-2-oxo-3-furanyl)-hexanamide, an autoinducer molecule which binds to LuxR and thus acts in bioluminescence regulation. This chain is Acyl-homoserine-lactone synthase (luxI), found in Aliivibrio fischeri (strain ATCC 700601 / ES114) (Vibrio fischeri).